A 264-amino-acid chain; its full sequence is Proteasome subunit beta type-4 (264 aa).

Position 1 is an N-acetylmethionine (Met-1). Positions 1–45 are excised as a propeptide; it reads MEALLESRSGLWAGGPAPGQFYRIPPTPGSSVDPVSALYGSPITR. A Phosphotyrosine modification is found at Tyr-102.

This sequence belongs to the peptidase T1B family. In terms of assembly, the 26S proteasome consists of a 20S proteasome core and two 19S regulatory subunits. The 20S proteasome core is a barrel-shaped complex made of 28 subunits that are arranged in four stacked rings. The two outer rings are each formed by seven alpha subunits, and the two inner rings are formed by seven beta subunits. The proteolytic activity is exerted by three beta-subunits PSMB5, PSMB6 and PSMB7. Forms a ternary complex with SMAD1 and OAZ1 before PSMB4 is incorporated into the 20S proteasome. Interacts with PRPF19.

It is found in the cytoplasm. It localises to the nucleus. Non-catalytic component of the 20S core proteasome complex involved in the proteolytic degradation of most intracellular proteins. This complex plays numerous essential roles within the cell by associating with different regulatory particles. Associated with two 19S regulatory particles, forms the 26S proteasome and thus participates in the ATP-dependent degradation of ubiquitinated proteins. The 26S proteasome plays a key role in the maintenance of protein homeostasis by removing misfolded or damaged proteins that could impair cellular functions, and by removing proteins whose functions are no longer required. Associated with the PA200 or PA28, the 20S proteasome mediates ubiquitin-independent protein degradation. This type of proteolysis is required in several pathways including spermatogenesis (20S-PA200 complex) or generation of a subset of MHC class I-presented antigenic peptides (20S-PA28 complex). SMAD1/OAZ1/PSMB4 complex mediates the degradation of the CREBBP/EP300 repressor SNIP1. This chain is Proteasome subunit beta type-4 (PSMB4), found in Bos taurus (Bovine).